Reading from the N-terminus, the 413-residue chain is Inactive serine protease 35 (413 aa).

A signal peptide spans 1–16 (MENMLLWLIFFTPGWT). N-linked (GlcNAc...) asparagine glycosylation is present at N90. The 285-residue stretch at 124 to 408 (VYGTDSRFSI…ICLWIHGNDA (285 aa)) folds into the Peptidase S1 domain. A disulfide bridge connects residues C154 and C170. Positions 191–207 (MRNKSGGKKRRGSKRSR) are enriched in basic residues. The interval 191 to 250 (MRNKSGGKKRRGSKRSRREASGGDQREGTREHLRERAKGGRRRKKSGRGQRIAEGRPSFQ) is disordered. Over residues 208–228 (REASGGDQREGTREHLRERAK) the composition is skewed to basic and acidic residues. The segment covering 229–238 (GGRRRKKSGR) has biased composition (basic residues).

Belongs to the peptidase S1 family.

Its subcellular location is the secreted. This Homo sapiens (Human) protein is Inactive serine protease 35 (PRSS35).